Consider the following 311-residue polypeptide: Homeobox-leucine zipper protein ATHB-6 (311 aa).

Positions 1-10 are enriched in polar residues; that stretch reads MMKRLSSSDS. The segment at 1–32 is disordered; sequence MMKRLSSSDSVGGLISLCPTTSTDEQSPRRYG. The tract at residues 1–43 is interaction with ABI1; it reads MMKRLSSSDSVGGLISLCPTTSTDEQSPRRYGGREFQSMLEGY. A DNA-binding region (homeobox) is located at residues 59-118; that stretch reads LSEKKRRLSINQVKALEKNFELENKLEPERKVKLAQELGLQPRQVAVWFQNRRARWKTKQ. Residues 119–154 form a leucine-zipper region; sequence LEKDYGVLKTQYDSLRHNFDSLRRDNESLLQEISKL. Positions 157-183 are disordered; the sequence is KLNGGGGEEEEEENNAAVTTESDISVK. Residues 218–311 are interaction with ABI1; sequence LRDLLPLKAA…HWYSTVDHWN (94 aa).

This sequence belongs to the HD-ZIP homeobox family. Class I subfamily. As to quaternary structure, interacts with ABI1. Post-translationally, phosphorylated by PKA. Reversible inactivation of the binding to DNA by phosphorylation. As to expression, widely expressed.

The protein resides in the nucleus. Functionally, transcription activator that may act as growth regulators in response to water deficit. Interacts with the core sequence 5'-CAATTATTA-3' of promoters in response to ABA and in an ABI1-dependent manner. Involved in the negative regulation of the ABA signaling pathway. In Arabidopsis thaliana (Mouse-ear cress), this protein is Homeobox-leucine zipper protein ATHB-6 (ATHB-6).